We begin with the raw amino-acid sequence, 121 residues long: Large ribosomal subunit protein bL19 (121 aa).

Belongs to the bacterial ribosomal protein bL19 family.

Functionally, this protein is located at the 30S-50S ribosomal subunit interface and may play a role in the structure and function of the aminoacyl-tRNA binding site. This Polaromonas sp. (strain JS666 / ATCC BAA-500) protein is Large ribosomal subunit protein bL19.